A 257-amino-acid polypeptide reads, in one-letter code: Type III pantothenate kinase (257 aa).

Asp6–Lys13 provides a ligand contact to ATP. Residue Gly109–Arg112 coordinates substrate. Asp111 (proton acceptor) is an active-site residue. Asp132 is a binding site for K(+). Residue Thr135 participates in ATP binding. Thr187 is a substrate binding site.

Belongs to the type III pantothenate kinase family. Homodimer. The cofactor is NH4(+). K(+) is required as a cofactor.

It localises to the cytoplasm. The catalysed reaction is (R)-pantothenate + ATP = (R)-4'-phosphopantothenate + ADP + H(+). Its pathway is cofactor biosynthesis; coenzyme A biosynthesis; CoA from (R)-pantothenate: step 1/5. In terms of biological role, catalyzes the phosphorylation of pantothenate (Pan), the first step in CoA biosynthesis. The polypeptide is Type III pantothenate kinase (Anaplasma marginale (strain Florida)).